The primary structure comprises 254 residues: Axonemal dynein light intermediate polypeptide 1 (254 aa).

The interval 1–55 is disordered; that stretch reads MIPPADSLLKHDNPVLISKNTERKSPKSRPLKVSSPQTVLTAPVPPPPKPKTPLL. The stretch at 175–245 forms a coiled coil; the sequence is ALQAEQGKSD…KRTNQQLKAQ (71 aa).

Belongs to the inner dynein arm light chain family.

Its subcellular location is the cell projection. The protein localises to the cilium. It is found in the flagellum. It localises to the dynein axonemal particle. The protein resides in the cytoplasm. Involved in sperm flagellum assembly. This chain is Axonemal dynein light intermediate polypeptide 1, found in Xenopus laevis (African clawed frog).